Here is a 279-residue protein sequence, read N- to C-terminus: 3-methyl-2-oxobutanoate hydroxymethyltransferase (279 aa).

Positions 44 and 83 each coordinate Mg(2+). 3-methyl-2-oxobutanoate-binding positions include 44-45 (DS), Asp-83, and Lys-112. Glu-114 is a Mg(2+) binding site. The active-site Proton acceptor is the Glu-180.

It belongs to the PanB family. In terms of assembly, homodecamer; pentamer of dimers. Mg(2+) is required as a cofactor.

The protein localises to the cytoplasm. The catalysed reaction is 3-methyl-2-oxobutanoate + (6R)-5,10-methylene-5,6,7,8-tetrahydrofolate + H2O = 2-dehydropantoate + (6S)-5,6,7,8-tetrahydrofolate. Its pathway is cofactor biosynthesis; (R)-pantothenate biosynthesis; (R)-pantoate from 3-methyl-2-oxobutanoate: step 1/2. In terms of biological role, catalyzes the reversible reaction in which hydroxymethyl group from 5,10-methylenetetrahydrofolate is transferred onto alpha-ketoisovalerate to form ketopantoate. The sequence is that of 3-methyl-2-oxobutanoate hydroxymethyltransferase from Chloroflexus aggregans (strain MD-66 / DSM 9485).